The sequence spans 1088 residues: RNA-directed RNA polymerase (1088 aa).

A RdRp catalytic domain is found at 501 to 687; that stretch reads LSYGDVTRFL…AKRYIAGGKI (187 aa).

The protein belongs to the reoviridae RNA-directed RNA polymerase family. In terms of assembly, interacts with VP3 (Potential). Interacts with VP2; this interaction activates VP1. Interacts with NSP5; this interaction is probably necessary for the formation of functional virus factories. Interacts with NSP2; this interaction is weak. Mg(2+) is required as a cofactor.

The protein resides in the virion. The catalysed reaction is RNA(n) + a ribonucleoside 5'-triphosphate = RNA(n+1) + diphosphate. Its function is as follows. RNA-directed RNA polymerase that is involved in both transcription and genome replication. Together with VP3 capping enzyme, forms an enzyme complex positioned near the channels situated at each of the five-fold vertices of the core. Following infection, the outermost layer of the virus is lost, leaving a double-layered particle (DLP) made up of the core and VP6 shell. VP1 then catalyzes the transcription of fully conservative plus-strand genomic RNAs that are extruded through the DLP's channels into the cytoplasm where they function as mRNAs for translation of viral proteins. One copy of each of the viral (+)RNAs is also recruited during core assembly, together with newly synthesized polymerase complexes and VP2. The polymerase of these novo-formed particles catalyzes the synthesis of complementary minus-strands leading to dsRNA formation. To do so, the polymerase specifically recognizes and binds 4 bases 5'-UGUG-3' in the conserved 3'-sequence of plus-strand RNA templates. VP2 presumably activates the autoinhibited VP1-RNA complex to coordinate packaging and genome replication. Once dsRNA synthesis is complete, the polymerase switches to the transcriptional mode, thus providing secondary transcription. The polypeptide is RNA-directed RNA polymerase (Homo sapiens (Human)).